We begin with the raw amino-acid sequence, 532 residues long: Ankyrin repeat-containing protein At2g01680 (532 aa).

7 ANK repeats span residues 9-38, 58-89, 93-122, 127-156, 161-190, 195-224, and 229-259; these read LTHQAFFSSVRSGDLSQLQQLVDNLTGDEL, AGETAVYISAAENLEDIFRYLIRFSSLETVKI, SDMNAFHVAAKRGHLGIVKELLRLWPELCR, SNTSPLYAAAVQDHLEIVNAMLDVDPSCAM, NGKTSLHTAGRYGLLRIVKALIEKDAAIVG, KGQTALHMAVKGRSLEVVEEILQADYTILN, and KGNTALHIATRKARPQITSLLLTFTAIEVNA. The next 4 helical transmembrane spans lie at 354 to 374, 396 to 416, 436 to 456, and 467 to 487; these read ITVVAVLFASIAFLAIFNLPG, VFCLLNATSLFISLAVVVVQI, LMWAACACTFGAFLAIAFAVV, and ITLLGAPILVGTLASMCYFVF.

It localises to the membrane. This chain is Ankyrin repeat-containing protein At2g01680, found in Arabidopsis thaliana (Mouse-ear cress).